Here is a 312-residue protein sequence, read N- to C-terminus: uncharacterized protein (312 aa).

Disordered regions lie at residues 1 to 26 and 45 to 106; these read MQKD…AMVA and GNLQ…LPSG. A compositionally biased stretch (basic residues) spans 8–17; that stretch reads RFQRNKKKIN. Positions 68-77 are enriched in basic and acidic residues; it reads NGKRNGDKVR. The span at 85–103 shows a compositional bias: polar residues; the sequence is GHSSYAGSRISGGNSNSHL.

This is an uncharacterized protein from Schizosaccharomyces pombe (strain 972 / ATCC 24843) (Fission yeast).